Consider the following 57-residue polypeptide: Large ribosomal subunit protein bL32 (57 aa).

The span at 1-16 (MAVQKSRKTPSRRGMR) shows a compositional bias: basic residues. The interval 1-37 (MAVQKSRKTPSRRGMRRSHDALSTTAITVDETTGELH) is disordered. Residues 21–31 (ALSTTAITVDE) are compositionally biased toward polar residues.

It belongs to the bacterial ribosomal protein bL32 family.

This chain is Large ribosomal subunit protein bL32, found in Hydrogenovibrio crunogenus (strain DSM 25203 / XCL-2) (Thiomicrospira crunogena).